Reading from the N-terminus, the 391-residue chain is Candidapepsin-1 (391 aa).

A signal peptide spans 1–18 (MFLKNIFIALAIALLVDA). Residues 19-50 (SPAKRSPGFVTLDFDVIKTPVNATGQEGKVKR) constitute a propeptide, activation peptide. The N-linked (GlcNAc...) asparagine glycan is linked to Asn40. One can recognise a Peptidase A1 domain in the interval 64–377 (YAADITIGSN…DLDDDKISLA (314 aa)). Asp82 is an active-site residue. A disulfide bridge connects residues Cys97 and Cys109. Residue Asp267 is part of the active site. Residues Cys305 and Cys343 are joined by a disulfide bond.

It belongs to the peptidase A1 family. O-glycosylated.

Its subcellular location is the secreted. The enzyme catalyses Preferential cleavage at the carboxyl of hydrophobic amino acids, but fails to cleave 15-Leu-|-Tyr-16, 16-Tyr-|-Leu-17 and 24-Phe-|-Phe-25 of insulin B chain. Activates trypsinogen, and degrades keratin.. This is Candidapepsin-1 (SAP1) from Candida albicans (strain WO-1) (Yeast).